Here is a 200-residue protein sequence, read N- to C-terminus: Elongation factor Ts (200 aa).

The interval 81-84 (TDFV) is involved in Mg(2+) ion dislocation from EF-Tu.

It belongs to the EF-Ts family.

The protein localises to the cytoplasm. Functionally, associates with the EF-Tu.GDP complex and induces the exchange of GDP to GTP. It remains bound to the aminoacyl-tRNA.EF-Tu.GTP complex up to the GTP hydrolysis stage on the ribosome. This Nitratidesulfovibrio vulgaris (strain DSM 19637 / Miyazaki F) (Desulfovibrio vulgaris) protein is Elongation factor Ts.